Reading from the N-terminus, the 180-residue chain is Probable macrolide acetyltransferase (180 aa).

Belongs to the transferase hexapeptide repeat family.

This is Probable macrolide acetyltransferase from Lysinibacillus sphaericus (Bacillus sphaericus).